The primary structure comprises 459 residues: ATP synthase subunit beta (459 aa).

148 to 155 contributes to the ATP binding site; it reads GGAGVGKT.

This sequence belongs to the ATPase alpha/beta chains family. In terms of assembly, F-type ATPases have 2 components, CF(1) - the catalytic core - and CF(0) - the membrane proton channel. CF(1) has five subunits: alpha(3), beta(3), gamma(1), delta(1), epsilon(1). CF(0) has three main subunits: a(1), b(2) and c(9-12). The alpha and beta chains form an alternating ring which encloses part of the gamma chain. CF(1) is attached to CF(0) by a central stalk formed by the gamma and epsilon chains, while a peripheral stalk is formed by the delta and b chains.

It is found in the cell inner membrane. The catalysed reaction is ATP + H2O + 4 H(+)(in) = ADP + phosphate + 5 H(+)(out). Produces ATP from ADP in the presence of a proton gradient across the membrane. The catalytic sites are hosted primarily by the beta subunits. The protein is ATP synthase subunit beta of Vesicomyosocius okutanii subsp. Calyptogena okutanii (strain HA).